A 295-amino-acid chain; its full sequence is Regucalcin (295 aa).

Residue Glu-18 coordinates a divalent metal cation. Residues Arg-100, Asn-102, and Asp-120 each coordinate substrate. The a divalent metal cation site is built by Asn-150 and Asp-200. Asp-200 serves as the catalytic Proton donor/acceptor.

This sequence belongs to the SMP-30/CGR1 family. Zn(2+) serves as cofactor. The cofactor is Mn(2+). Requires Ca(2+) as cofactor. Mg(2+) is required as a cofactor.

It is found in the cytoplasm. It carries out the reaction D-glucono-1,5-lactone + H2O = D-gluconate + H(+). It participates in cofactor biosynthesis; L-ascorbate biosynthesis via UDP-alpha-D-glucuronate pathway; L-ascorbate from UDP-alpha-D-glucuronate: step 3/4. Its function is as follows. Gluconolactonase with low activity towards other sugar lactones, including gulonolactone and galactonolactone. Catalyzes a key step in ascorbic acid (vitamin C) biosynthesis. Can also hydrolyze diisopropyl phosphorofluoridate and phenylacetate (in vitro). Calcium-binding protein. Modulates Ca(2+) signaling, and Ca(2+)-dependent cellular processes and enzyme activities. This is Regucalcin from Danio rerio (Zebrafish).